The sequence spans 491 residues: 3-octaprenyl-4-hydroxybenzoate carboxy-lyase (491 aa).

Position 172 (Asn-172) interacts with Mn(2+). Residues 175–177, 189–191, and 194–195 each bind prenylated FMN; these read IYR, RWL, and RG. Glu-238 provides a ligand contact to Mn(2+). The Proton donor role is filled by Asp-287.

It belongs to the UbiD family. Homohexamer. Prenylated FMN serves as cofactor. Mn(2+) is required as a cofactor.

The protein resides in the cell membrane. The enzyme catalyses a 4-hydroxy-3-(all-trans-polyprenyl)benzoate + H(+) = a 2-(all-trans-polyprenyl)phenol + CO2. It functions in the pathway cofactor biosynthesis; ubiquinone biosynthesis. Functionally, catalyzes the decarboxylation of 3-octaprenyl-4-hydroxy benzoate to 2-octaprenylphenol, an intermediate step in ubiquinone biosynthesis. The protein is 3-octaprenyl-4-hydroxybenzoate carboxy-lyase of Histophilus somni (strain 2336) (Haemophilus somnus).